The chain runs to 258 residues: 14-3-3-like protein F (258 aa).

The protein belongs to the 14-3-3 family.

The chain is 14-3-3-like protein F from Nicotiana tabacum (Common tobacco).